The primary structure comprises 208 residues: Outer-membrane lipoprotein carrier protein (208 aa).

The N-terminal stretch at 1-21 (MKRTATLLVVALILALNTAQA) is a signal peptide.

The protein belongs to the LolA family. As to quaternary structure, monomer.

Its subcellular location is the periplasm. Participates in the translocation of lipoproteins from the inner membrane to the outer membrane. Only forms a complex with a lipoprotein if the residue after the N-terminal Cys is not an aspartate (The Asp acts as a targeting signal to indicate that the lipoprotein should stay in the inner membrane). The sequence is that of Outer-membrane lipoprotein carrier protein from Halorhodospira halophila (strain DSM 244 / SL1) (Ectothiorhodospira halophila (strain DSM 244 / SL1)).